We begin with the raw amino-acid sequence, 539 residues long: O-phosphoserine--tRNA(Cys) ligase (539 aa).

Residues 188 to 190 (HMT), 233 to 235 (SAS), 275 to 276 (YY), and Asn-327 contribute to the substrate site.

It belongs to the class-II aminoacyl-tRNA synthetase family. O-phosphoseryl-tRNA(Cys) synthetase subfamily. In terms of assembly, homotetramer. Interacts with SepCysS.

It carries out the reaction tRNA(Cys) + O-phospho-L-serine + ATP = O-phospho-L-seryl-tRNA(Cys) + AMP + diphosphate. Functionally, catalyzes the attachment of O-phosphoserine (Sep) to tRNA(Cys). In Methanosarcina mazei (strain ATCC BAA-159 / DSM 3647 / Goe1 / Go1 / JCM 11833 / OCM 88) (Methanosarcina frisia), this protein is O-phosphoserine--tRNA(Cys) ligase.